Reading from the N-terminus, the 259-residue chain is Flagellar L-ring protein (259 aa).

The N-terminal stretch at 1 to 15 (MKRISLIALVTLMSG) is a signal peptide. The N-palmitoyl cysteine moiety is linked to residue C16. C16 is lipidated: S-diacylglycerol cysteine.

This sequence belongs to the FlgH family. In terms of assembly, the basal body constitutes a major portion of the flagellar organelle and consists of four rings (L,P,S, and M) mounted on a central rod.

The protein resides in the cell outer membrane. Its subcellular location is the bacterial flagellum basal body. Functionally, assembles around the rod to form the L-ring and probably protects the motor/basal body from shearing forces during rotation. The sequence is that of Flagellar L-ring protein from Vibrio vulnificus (strain YJ016).